A 287-amino-acid polypeptide reads, in one-letter code: 4-hydroxybenzoate octaprenyltransferase (287 aa).

The next 7 membrane-spanning stretches (helical) occupy residues 30–50, 92–112, 133–153, 158–178, 207–227, 232–252, and 266–286; these read ALWIASDGHPAPSLVAIFALG, IAIAVGLALVSFLLILPLNGL, FFAIPQAYLGIAFGFGIPMAF, DTVPMIAWAMLAANVFWSVAY, VLAIMLCYAAMLGIYVWLGAA, WPYWAGWAAAAGCSIYHYTLI, and HNNWLGGVLFAGIAAHYALAV.

It belongs to the UbiA prenyltransferase family. Mg(2+) is required as a cofactor.

It localises to the cell inner membrane. It catalyses the reaction all-trans-octaprenyl diphosphate + 4-hydroxybenzoate = 4-hydroxy-3-(all-trans-octaprenyl)benzoate + diphosphate. The protein operates within cofactor biosynthesis; ubiquinone biosynthesis. Its function is as follows. Catalyzes the prenylation of para-hydroxybenzoate (PHB) with an all-trans polyprenyl group. Mediates the second step in the final reaction sequence of ubiquinone-8 (UQ-8) biosynthesis, which is the condensation of the polyisoprenoid side chain with PHB, generating the first membrane-bound Q intermediate 3-octaprenyl-4-hydroxybenzoate. This chain is 4-hydroxybenzoate octaprenyltransferase, found in Burkholderia pseudomallei (strain 1106a).